The following is a 1132-amino-acid chain: DNA-directed RNA polymerase subunit beta (1132 aa).

Belongs to the RNA polymerase beta chain family. The RNAP catalytic core consists of 2 alpha, 1 beta, 1 beta' and 1 omega subunit. When a sigma factor is associated with the core the holoenzyme is formed, which can initiate transcription.

It carries out the reaction RNA(n) + a ribonucleoside 5'-triphosphate = RNA(n+1) + diphosphate. DNA-dependent RNA polymerase catalyzes the transcription of DNA into RNA using the four ribonucleoside triphosphates as substrates. This Carboxydothermus hydrogenoformans (strain ATCC BAA-161 / DSM 6008 / Z-2901) protein is DNA-directed RNA polymerase subunit beta.